The chain runs to 126 residues: SOSS complex subunit C homolog (126 aa).

A disordered region spans residues 106–126; the sequence is LEPLPSPATTPTAPPSHSISK. Pro residues predominate over residues 107 to 119; it reads EPLPSPATTPTAP.

Belongs to the SOSS-C family.

This chain is SOSS complex subunit C homolog, found in Drosophila sechellia (Fruit fly).